Consider the following 796-residue polypeptide: Armadillo repeat-containing protein wrm-1 (796 aa).

The segment at 17 to 59 (NFNPMTPSTSRVSTPVRPSSTMSARQYSGSPFKAQPQNMEPSN) is disordered. Residues 462-504 (ESIHCIVQLIGCSDVTIVELATGTLRNIGLHNKMNKAFMVQDG) form an ARM repeat.

In terms of assembly, interacts (independently of ARM repeat) with nhr-25. Component of the beta-catenin-lit-1 complex (also called the lit-1/wrm-1 complex or the wrm-1/lit-1 kinase complex) at least composed of lit-1 and wrm-1. Interacts (via N-terminus) with lit-1; the interaction is direct and activates lit-1 kinase activity which leads to the phosphorylation of pop-1. This promotes pop-1 interaction with par-5 and translocation of pop-1 from the nucleus to the cytoplasm.

It is found in the cytoplasm. Its subcellular location is the cell cortex. The protein resides in the nucleus. Functionally, antagonistic role in the Wnt signaling pathway that operates in embryogenesis. When located at the cortex it has been shown to inhibit Wnt signaling during asymmetric cell division but when relocated to the nucleus it shows positive regulation. Has a role in blastomere signaling during endoderm specification. Component of the beta-catenin-lit-1 complex which promotes phosphorylation, down-regulation and subcellular relocation of pop-1. Within the complex, activates lit-1-dependent kinase activity. Can substitute for bar-1 indicating functional redundancy. Appears to have a role in centrosome positioning and can activation transcription in yeast. Involved in the development of distal tip cells (DTC) by regulating the asymmetric distribution of cye-1 and cki-1 between the daughters of Z1.a and Z4.p cells. The sequence is that of Armadillo repeat-containing protein wrm-1 from Caenorhabditis elegans.